A 362-amino-acid chain; its full sequence is Phosphoserine aminotransferase (362 aa).

Residue Arg42 participates in L-glutamate binding. Pyridoxal 5'-phosphate contacts are provided by Trp102, Thr154, Asp174, and Gln197. An N6-(pyridoxal phosphate)lysine modification is found at Lys198. 239–240 contacts pyridoxal 5'-phosphate; the sequence is NT.

The protein belongs to the class-V pyridoxal-phosphate-dependent aminotransferase family. SerC subfamily. Homodimer. Requires pyridoxal 5'-phosphate as cofactor.

The protein localises to the cytoplasm. It carries out the reaction O-phospho-L-serine + 2-oxoglutarate = 3-phosphooxypyruvate + L-glutamate. It catalyses the reaction 4-(phosphooxy)-L-threonine + 2-oxoglutarate = (R)-3-hydroxy-2-oxo-4-phosphooxybutanoate + L-glutamate. The protein operates within amino-acid biosynthesis; L-serine biosynthesis; L-serine from 3-phospho-D-glycerate: step 2/3. It functions in the pathway cofactor biosynthesis; pyridoxine 5'-phosphate biosynthesis; pyridoxine 5'-phosphate from D-erythrose 4-phosphate: step 3/5. In terms of biological role, catalyzes the reversible conversion of 3-phosphohydroxypyruvate to phosphoserine and of 3-hydroxy-2-oxo-4-phosphonooxybutanoate to phosphohydroxythreonine. The protein is Phosphoserine aminotransferase of Haemophilus ducreyi (strain 35000HP / ATCC 700724).